A 493-amino-acid chain; its full sequence is Dipeptidase 3 (493 aa).

The N-terminal stretch at 1 to 35 (MQPAGLEGPRALGLRPLGHRLSLLGVLLLVPSLWV) is a signal peptide. Residues 41-60 (TPSPSSAPTTPEASNATTAP) show a composition bias toward low complexity. The tract at residues 41–74 (TPSPSSAPTTPEASNATTAPGIPNDTATSGVTSD) is disordered. Cystine bridges form between Cys143–Cys222 and Cys294–Cys326. Asn331 carries an N-linked (GlcNAc...) asparagine glycan. Residue Ser462 is the site of GPI-anchor amidated serine attachment. Residues 463 to 493 (KAPPHPLPGLMATLTSLALILWLCCSGHRAV) constitute a propeptide, removed in mature form.

This sequence belongs to the metallo-dependent hydrolases superfamily. Peptidase M19 family. Homodimer; disulfide-linked. Interacts with TEX101; co-localized on the cell surface of spermatocytes, spermatids, and testicular spermatozoa, co-localized only in cytoplasmic droplets of caput and corpus epididymal sperm. As to expression, expressed in testis but not ovary.

It localises to the membrane. Its function is as follows. Lacks dipeptidase activity and is unable to hydrolyze cystinyl-bis-glycine. The absence of activity may be due to the inability of serine (instead of aspartate found in DPEP1/2) at position 356 to function as the acid/base catalyst and activate the nucleophilic water/hydroxide. Does not hydrolyze leukotriene D4 (LTD4) into leukotriene E4 (LTE4). Does not hydrolyze the beta-lactam antibiotic imipenem. This chain is Dipeptidase 3 (Dpep3), found in Mus musculus (Mouse).